Consider the following 881-residue polypeptide: Heat shock protein 70 homolog LHS1 (881 aa).

The first 20 residues, 1-20 (MRNVLRLLFLTAFVAIGSLA), serve as a signal peptide directing secretion. 7 N-linked (GlcNAc...) asparagine glycosylation sites follow: N128, N458, N474, N481, N489, N527, and N844. Basic and acidic residues predominate over residues 833–844 (RKLEQEKSRNNN). The interval 833 to 881 (RKLEQEKSRNNNETESTVINSADDKTTIVNDKTTESNPSSEEDILHDEL) is disordered. Residues 859–871 (TIVNDKTTESNPS) are compositionally biased toward polar residues. Positions 872 to 881 (SEEDILHDEL) are enriched in acidic residues. Positions 878–881 (HDEL) match the Prevents secretion from ER motif.

This sequence belongs to the heat shock protein 70 family. In terms of assembly, interacts with the heat shock protein 70 (HSP70) KAR2, and this stimulates nucleotide exchange on KAR2. KAR2 in turn acts to stimulate the ATPase activity of LHS1. In terms of processing, N-glycosylated.

The protein resides in the endoplasmic reticulum lumen. It catalyses the reaction ATP + H2O = ADP + phosphate + H(+). In terms of biological role, chaperone required for protein translocation and folding in the endoplasmic reticulum. The protein is Heat shock protein 70 homolog LHS1 (LHS1) of Saccharomyces cerevisiae (strain ATCC 204508 / S288c) (Baker's yeast).